The sequence spans 101 residues: Large ribosomal subunit protein uL24 (101 aa).

Belongs to the universal ribosomal protein uL24 family. As to quaternary structure, part of the 50S ribosomal subunit.

Functionally, one of two assembly initiator proteins, it binds directly to the 5'-end of the 23S rRNA, where it nucleates assembly of the 50S subunit. In terms of biological role, one of the proteins that surrounds the polypeptide exit tunnel on the outside of the subunit. In Cereibacter sphaeroides (strain ATCC 17025 / ATH 2.4.3) (Rhodobacter sphaeroides), this protein is Large ribosomal subunit protein uL24.